A 958-amino-acid polypeptide reads, in one-letter code: MRTHTRGAPSVFFIYLLCFVSAYITDENPEVMIPFTNANYDSHPMLYFSRAEVAELQLRAASSHEHIAARLTEAVHTMLSSPLEYLPPWDPKDYSARWNEIFGNNLGALAMFCVLYPENIEARDMAKDYMERMAAQPSWLVKDAPWDEVPLAHSLVGFATAYDFLYNYLSKTQQEKFLEVIANASGYMYETSYRRGWGFQYLHNHQPTNCMALLTGSLVLMNQGYLQEAYLWTKQVLTIMEKSLVLLREVTDGSLYEGVAYGSYTTRSLFQYMFLVQRHFNINHFGHPWLKQHFAFMYRTILPGFQRTVAIADSNYNWFYGPESQLVFLDKFVMRNGSGNWLADQIRRNRVVEGPGTPSKGQRWCTLHTEFLWYDGSLKSVPPPDFGTPTLHYFEDWGVVTYGSALPAEINRSFLSFKSGKLGGRAIYDIVHRNKYKDWIKGWRNFNAGHEHPDQNSFTFAPNGVPFITEALYGPKYTFFNNVLMFSPAVSKSCFSPWVGQVTEDCSSKWSKYKHDLAASCQGRVVAAEEKNGVVFIRGEGVGAYNPQLNLKNVQRNLILLHPQLLLLVDQIHLGEESPLETAASFFHNVDVPFEETVVDGVHGAFIRQRDGLYKMYWMDDTGYSEKATFASVTYPRGYPYNGTNYVNVTMHLRSPITRAAYLFIGPSIDVQSFTVHGDSQQLDVFIATSKHAYATYLWTGEATGQSAFAQVIADRHKILFDRNSAIKSSIVPEVKDYAAIVEQNLQHFKPVFQLLEKQILSRVRNTASFRKTAERLLRFSDKRQTEEAIDRIFAISQQQQQQSKSKKNRRAGKRYKFVDAVPDIFAQIEVNEKKIRQKAQILAQKELPIDEDEEMKDLLDFADVTYEKHKNGGLIKGRFGQARMVTTTHSRAPSLSASYTRLFLILNIAIFFVMLAMQLTYFQRAQSLHGQRCLYAVLLIDSCILLWLYSSCSQSQC.

Positions 1-22 (MRTHTRGAPSVFFIYLLCFVSA) are cleaved as a signal peptide. At 23-902 (YITDENPEVM…APSLSASYTR (880 aa)) the chain is on the lumenal side. Asn183 carries an N-linked (GlcNAc...) (complex) asparagine glycan. The Proton donor role is filled by His205. Residue Tyr261 is part of the active site. Residue Asn336 is glycosylated (N-linked (GlcNAc...) (high mannose) asparagine). Residue Asn411 is glycosylated (N-linked (GlcNAc...) (complex) asparagine). Mn(2+) contacts are provided by His452 and Glu470. Tyr473 is a catalytic residue. Asn481 contributes to the Mn(2+) binding site. N-linked (GlcNAc...) (complex) asparagine glycosylation occurs at Asn642. The N-linked (GlcNAc...) (paucimannose) asparagine glycan is linked to Asn648. Residues 903 to 923 (LFLILNIAIFFVMLAMQLTYF) traverse the membrane as a helical segment. Residues 924–933 (QRAQSLHGQR) lie on the Cytoplasmic side of the membrane. Residues 934–954 (CLYAVLLIDSCILLWLYSSCS) traverse the membrane as a helical segment. The Lumenal portion of the chain corresponds to 955–958 (QSQC).

The protein belongs to the dermatan-sulfate isomerase family. Requires Mn(2+) as cofactor. Post-translationally, N-glycosylated. Glycosylation is important for enzymatic activity. In terms of tissue distribution, ubiquitously expressed with higher expression in kidney and ovary and lower expression in brain, colon and thymus. Also expressed in renal cell carcinomas, brain tumors, and in a part of melanomas and adenocarcinomas from organs other than the breast. Expressed in squamous cell carcinomas (SCC), glioma, and some adenocarcinoma cell lines, but not in breast cancer cell lines or any normal tissues (at protein level).

The protein resides in the endoplasmic reticulum membrane. Its subcellular location is the golgi apparatus membrane. The protein localises to the cytoplasmic vesicle membrane. It localises to the microsome membrane. The catalysed reaction is chondroitin 4'-sulfate = dermatan 4'-sulfate. It functions in the pathway glycan metabolism; chondroitin sulfate biosynthesis. It participates in glycan metabolism; heparan sulfate biosynthesis. Its function is as follows. Converts D-glucuronic acid to L-iduronic acid (IdoUA) residues. Plays an important role in the biosynthesis of the glycosaminoglycan/mucopolysaccharide dermatan sulfate. This Homo sapiens (Human) protein is Dermatan-sulfate epimerase (DSE).